A 3033-amino-acid polypeptide reads, in one-letter code: Genome polyprotein (3033 aa).

Ser2 carries the N-acetylserine; by host modification. The interval Ser2–Lys23 is interaction with STAT1. The segment at Ser2–Pro58 is interaction with EIF2AK2/PKR. Positions Ser2–Arg59 are interaction with DDX3X. The tract at residues Ser2–Ser75 is disordered. Residues Ser2 to Asn168 lie on the Cytoplasmic side of the membrane. Short sequence motifs (nuclear localization signal) lie at residues Pro5–Arg13 and Pro38–Arg43. Residues Pro7–Asn16 show a composition bias toward basic residues. Residues Gly32–Arg47 show a composition bias toward low complexity. Position 53 is a phosphoserine; by host (Ser53). 2 short sequence motifs (nuclear localization signal) span residues Pro58 to Pro64 and Pro66 to Ser71. Phosphoserine; by host occurs at positions 99 and 116. The interval Pro112–Ala152 is important for endoplasmic reticulum and mitochondrial localization. Residues Val122 to Ser173 form an interaction with APOA2 region. The tract at residues Tyr164–Gly167 is important for lipid droplets localization. The helical transmembrane segment at Leu169–Val189 threads the bilayer. A propeptide spans Leu178–Ala191 (ER anchor for the core protein, removed in mature form by host signal peptidase). The Lumenal portion of the chain corresponds to Ser190–Gly358. 3 N-linked (GlcNAc...) asparagine; by host glycosylation sites follow: Asn196, Asn209, and Asn234. The interval Ile265–Gln296 is important for fusion. Residue Asn305 is glycosylated (N-linked (GlcNAc...) asparagine; by host). Residues Leu359–Ala379 form a helical membrane-spanning segment. Residues Gly380–Leu729 are Lumenal-facing. Positions Thr385 to Gln412 are HVR1. N-linked (GlcNAc...) (high mannose) asparagine; by host glycosylation is found at Asn417, Asn423, and Asn430. Cystine bridges form between Cys429–Cys554, Cys452–Cys459, Cys488–Cys496, and Cys505–Cys510. A glycan (N-linked (GlcNAc...) asparagine; by host) is linked at Asn448. The tract at residues Glu475–Asn480 is HVR2. A glycan (N-linked (GlcNAc...) asparagine; by host) is linked at Asn477. Positions Asp482 to Pro495 are CD81-binding 1. Asn534 is a glycosylation site (N-linked (GlcNAc...) asparagine; by host). Residues Pro546–Gly553 are CD81-binding 2. N-linked (GlcNAc...) asparagine; by host glycosylation occurs at Asn558. Cystine bridges form between Cys566–Cys571, Cys585–Cys589, Cys601–Cys624, and Cys611–Cys648. N-linked (GlcNAc...) (high mannose) asparagine; by host glycans are attached at residues Asn627 and Asn649. Cys656 and Cys681 are joined by a disulfide. The segment at Ser664–Glu675 is PKR/eIF2-alpha phosphorylation homology domain (PePHD). The helical transmembrane segment at Leu730–Ala750 threads the bilayer. At Ala751–Ala761 the chain is on the lumenal side. The helical transmembrane segment at Ser762 to Ile782 threads the bilayer. The Cytoplasmic segment spans residues Lys783–Val786. Residues Thr787–Leu807 traverse the membrane as a helical segment. At Pro808–Thr817 the chain is on the lumenal side. Residues Glu818–Ala838 form a helical membrane-spanning segment. The Cytoplasmic segment spans residues Tyr839–Cys885. A helical membrane pass occupies residues Pro886–Leu906. The Peptidase C18 domain occupies Gly903–Leu1030. At Arg907–Leu932 the chain is on the lumenal side. The interval Ser908–Arg1210 is protease NS2-3. A lipid anchor (S-palmitoyl cysteine; by host) is attached at Cys926. The chain crosses the membrane as a helical span at residues Ser933 to Ile953. The tract at residues Ser933–Ile953 is interaction with host SCPS1. Residues Tyr954–Thr1661 are Cytoplasmic-facing. Catalysis depends on for protease NS2 activity; shared with dimeric partner residues His956, Glu976, and Cys997. The Peptidase S29 domain occupies Ala1031 to Pro1212. Catalysis depends on charge relay system; for serine protease NS3 activity residues His1087 and Asp1111. 2 residues coordinate Zn(2+): Cys1127 and Cys1129. Residue Ser1169 is the Charge relay system; for serine protease NS3 activity of the active site. Residues Cys1175 and His1179 each contribute to the Zn(2+) site. A Helicase ATP-binding domain is found at Pro1221–His1373. An ATP-binding site is contributed by Ala1234–Ser1241. Residues Ser1241 and Glu1321 each contribute to the Mg(2+) site. The DECH box motif lies at Asp1320–His1323. The segment at Gln1490–Ile1502 is RNA-binding. The chain crosses the membrane as a helical span at residues Ser1662–Gly1682. Residues Cys1683 to Gln1694 are NS3-binding. Over Cys1683–Thr1809 the chain is Cytoplasmic. Residues Thr1810–Ala1830 form a helical membrane-spanning segment. Topologically, residues Thr1831 to Gly1832 are lumenal. The helical transmembrane segment at Phe1833–Val1853 threads the bilayer. A topological domain (cytoplasmic) is located at residue Asp1854. A helical transmembrane segment spans residues Val1855–Gly1875. The Lumenal segment spans residues Glu1876–Asn1885. Residues Leu1886 to Leu1906 form a helical membrane-spanning segment. Residues Arg1907–Cys1976 lie on the Cytoplasmic side of the membrane. The S-palmitoyl cysteine; by host moiety is linked to residue Cys1976. An intramembrane segment occupies Ala1977–Met2007. Residues Pro2008–Arg3012 are Cytoplasmic-facing. The Zn(2+) site is built by Cys2015, Cys2033, Cys2035, and Cys2056. Positions Glu2124 to Ala2212 are FKBP8-binding. Residues Glu2124 to Ala2332 are transcriptional activation. An interaction with non-structural protein 4A region spans residues Pro2139 to Pro2143. The interval Arg2193 to Ala2212 is disordered. The segment at Arg2193–Glu2460 is interaction with host SKP2. 6 positions are modified to phosphoserine; by host: Ser2198, Ser2201, Ser2205, Ser2208, Ser2211, and Ser2214. Low complexity predominate over residues Ser2198–Ala2212. Residues Ser2214–Lys2249 are ISDR. The interaction with EIF2AK2/PKR stretch occupies residues Ser2214–Leu2275. Positions Lys2249–Tyr2306 are NS4B-binding. Residues Glu2299 to Pro2376 form a V3 region. A disordered region spans residues Pro2308–Arg2328. Residues Ala2322 to Pro2325 carry the SH3-binding motif. The short motif at Pro2327 to Leu2335 is the Nuclear localization signal element. Lys2350 participates in a covalent cross-link: Glycyl lysine isopeptide (Lys-Gly) (interchain with G-Cter in ubiquitin). Positions Gly2353 to Thr2431 are disordered. The span at Ser2361–Thr2373 shows a compositional bias: polar residues. Residues Ser2471 and Ser2484 each carry the phosphoserine; by host modification. One can recognise a RdRp catalytic domain in the interval Pro2656–Asp2774. Mg(2+) is bound by residues Asp2662, Asp2760, and Asp2761. Residues Phe3013–Arg3033 traverse the membrane as a helical segment.

It belongs to the hepacivirus polyprotein family. In terms of assembly, homooligomer. Interacts with E1 (via C-terminus). Interacts with the non-structural protein 5A. Interacts (via N-terminus) with host STAT1 (via SH2 domain); this interaction results in decreased STAT1 phosphorylation and ubiquitin-mediated proteasome-dependent STAT1 degradation, leading to decreased IFN-stimulated gene transcription. Interacts with host STAT3; this interaction constitutively activates STAT3. Interacts with host LTBR receptor. Interacts with host TNFRSF1A receptor and possibly induces apoptosis. Interacts with host HNRPK. Interacts with host YWHAE. Interacts with host UBE3A/E6AP. Interacts with host DDX3X. Interacts with host APOA2. Interacts with host RXRA protein. Interacts with host SP110 isoform 3/Sp110b; this interaction sequesters the transcriptional corepressor SP110 away from the nucleus. Interacts with host CREB3 nuclear transcription protein; this interaction triggers cell transformation. Interacts with host ACY3. Interacts with host C1QR1. Interacts with host RBM24; this interaction, which enhances the interaction of the mature core protein with 5'-UTR, may inhibit viral translation and favor replication. Interacts with host EIF2AK2/PKR; this interaction induces the autophosphorylation of EIF2AK2. Part of the viral assembly initiation complex composed of NS2, E1, E2, NS3, NS4A, NS5A and the mature core protein. Forms a heterodimer with envelope glycoprotein E2. Interacts with mature core protein. Interacts with protease NS2. The heterodimer E1/E2 interacts with host CLDN1; this interaction plays a role in viral entry into host cell. Interacts with host SPSB2 (via C-terminus). Part of the viral assembly initiation complex composed of NS2, E1, E2, NS3, NS4A, NS5A and the mature core protein. Interacts with host NEURL3; this interaction prevents E1 binding to glycoprotein E2. As to quaternary structure, forms a heterodimer with envelope glycoprotein E1. Interacts with host CD81 and SCARB1 receptors; these interactions play a role in viral entry into host cell. Interacts with host EIF2AK2/PKR; this interaction inhibits EIF2AK2 and probably allows the virus to evade the innate immune response. Interacts with host CD209/DC-SIGN and CLEC4M/DC-SIGNR. Interact with host SPCS1; this interaction is essential for viral particle assembly. Interacts with protease NS2. The heterodimer E1/E2 interacts with host CLDN1; this interaction plays a role in viral entry into host cell. Part of the viral assembly initiation complex composed of NS2, E1, E2, NS3, NS4A, NS5A and the mature core protein. Interacts with host SLC3A2/4F2hc; the interaction may facilitate viral entry into host cell. Interacts with human PLSCR1. In terms of assembly, homohexamer. Homoheptamer. Interacts with protease NS2. Homodimer. Interacts with host SPCS1; this interaction is essential for viral particle assembly. Interacts with envelope glycoprotein E1. Interacts with envelope glycoprotein E2. Interacts with viroporin p7. Interacts with serine protease/helicase NS3. Part of the replication complex composed of NS2, NS3, NS4A, NS4B, NS5A and the RNA-directed RNA polymerase embedded in an ER-derived membranous web. Part of the viral assembly initiation complex composed of NS2, E1, E2, NS3, NS4A, NS5A and the mature core protein. As to quaternary structure, interacts with protease NS2. Interacts with non-structural protein 4A; this interaction stabilizes the folding of NS3 serine protease. NS3-NS4A interaction is essential for NS3 activation and allows membrane anchorage of the latter. NS3/NS4A complex also prevents phosphorylation of host IRF3, thus preventing the establishment of dsRNA induced antiviral state. Interacts with host MAVS; this interaction leads to the cleavage and inhibition of host MAVS. Interacts with host TICAM1; this interaction leads to the cleavage and inhibition of host TICAM1. Interacts with host TANK-binding kinase/TBK1; this interaction results in the inhibition of the association between TBK1 and IRF3, which leads to the inhibition of IRF3 activation. Interacts with host RBM24. Part of the replication complex composed of NS2, NS3, NS4A, NS4B, NS5A and the RNA-directed RNA polymerase embedded in an ER-derived membranous web. Part of the viral assembly initiation complex composed of NS2, E1, E2, NS3, NS4A, NS5A and the mature core protein. In terms of assembly, interacts with NS3 serine protease; this interaction stabilizes the folding of NS3 serine protease. NS3-NS4A interaction is essential for NS3 activation and allows membrane anchorage of the latter. Interacts with non-structural protein 5A (via N-terminus). Part of the replication complex composed of NS2, NS3, NS4A, NS4B, NS5A and the RNA-directed RNA polymerase embedded in an ER-derived membranous web. Part of the viral assembly initiation complex composed of NS2, E1, E2, NS3, NS4A, NS5A and the mature core protein. Homomultimer. Interacts with non-structural protein NS5A. Interacts with host PLA2G4C; this interaction likely initiates the recruitment of replication complexes to lipid droplets. Interacts with host STING; this interaction disrupts the interaction between STING and TBK1 thereby suppressing the interferon signaling. Part of the replication complex composed of NS2, NS3, NS4A, NS4B, NS5A and the RNA-directed RNA polymerase embedded in an ER-derived membranous web. As to quaternary structure, monomer. Homodimer; dimerization is required for RNA-binding. Interacts with the mature core protein. Interacts (via N-terminus) with non-structural protein 4A. Interacts with non-structural protein 4B. Interacts (via region D2) with RNA-directed RNA polymerase. Part of the viral assembly initiation complex composed of NS2, E1, E2, NS3, NS4A, NS5A and the mature core protein. Part of the replication complex composed of NS2, NS3, NS4A, NS4B, NS5A and the RNA-directed RNA polymerase embedded in an ER-derived membranous web. Interacts with host GRB2. Interacts with host BIN1. Interacts with host PIK3R1. Interacts with host SRCAP. Interacts with host FKBP8. Interacts (via C-terminus) with host VAPB (via MSP domain). Interacts with host EIF2AK2/PKR; this interaction leads to disruption of EIF2AK2 dimerization by NS5A and probably allows the virus to evade the innate immune response. Interacts (via N-terminus) with host PACSIN2 (via N-terminus); this interaction attenuates protein kinase C alpha-mediated phosphorylation of PACSIN2 by disrupting the interaction between PACSIN2 and PRKCA. Interacts (via N-terminus) with host SRC kinase (via SH2 domain). Interacts with most Src-family kinases. Interacts with host IFI27 and SKP2; promotes the ubiquitin-mediated proteasomal degradation of NS5A. Interacts with host GPS2. Interacts with host TNFRSF21; this interaction allows the modulation by the virus of JNK, p38 MAPK, STAT3, and Akt signaling pathways in a DR6-dependent manner. Interacts (via N-terminus) with host CIDEB (via N-terminus); this interaction seems to regulate the association of HCV particles with APOE. Interacts with host CHKA/Choline Kinase-alpha; CHKA bridges host PI4KA and NS5A and potentiates NS5A-stimulated PI4KA activity, which then facilitates the targeting of the ternary complex to the ER for viral replication. Interacts with host SPSB2 (via C-terminus); this interaction targets NS5A for ubiquitination and degradation. Interacts with host RAB18; this interaction may promote the association of NS5A and other replicase components with lipid droplets. Interacts (via region D2) with host PPIA/CYPA; the interaction stimulates RNA-binding ability of NS5A and is dependent on the peptidyl-prolyl cis-trans isomerase activity of PPIA/CYPA. Interacts with host TRIM14; this interaction induces the degradation of NS5A. In terms of assembly, homooligomer. Interacts with non-structural protein 5A. Interacts with host VAPB. Interacts with host PRK2/PKN2. Interacts with host HNRNPA1 and SEPT6; these interactions facilitate viral replication. Part of the replication complex composed of NS2, NS3, NS4A, NS4B, NS5A and the RNA-directed RNA polymerase. The cofactor is Zn(2+). Mg(2+) serves as cofactor. In terms of processing, specific enzymatic cleavages in vivo yield mature proteins. The structural proteins, core, E1, E2 and p7 are produced by proteolytic processing by host signal peptidases. The core protein precursor is synthesized as a 23 kDa, which is retained in the ER membrane through the hydrophobic signal peptide. Cleavage by the signal peptidase releases the 21 kDa mature core protein. The cleavage of the core protein precursor occurs between aminoacids 176 and 188 but the exact cleavage site is not known. Some degraded forms of the core protein appear as well during the course of infection. The other proteins (p7, NS2, NS3, NS4A, NS4B, NS5A and NS5B) are cleaved by the viral proteases. Autoprocessing between NS2 and NS3 is mediated by the NS2 cysteine protease catalytic domain and regulated by the NS3 N-terminal domain. Phosphorylated by host PKC and PKA. Post-translationally, ubiquitinated; mediated by UBE3A and leading to core protein subsequent proteasomal degradation. In terms of processing, highly N-glycosylated. Palmitoylation is required for NS2/3 autoprocessing and E2 recruitment to membranes. Post-translationally, palmitoylated. This modification may play a role in its polymerization or in protein-protein interactions. In terms of processing, phosphorylated on serines in a basal form termed p56. p58 is a hyperphosphorylated form of p56. p56 and p58 coexist in the cell in roughly equivalent amounts. Hyperphosphorylation is dependent on the presence of NS4A. Host CSNK1A1/CKI-alpha or RPS6KB1 kinases may be responsible for NS5A phosphorylation. Tyrosine phosphorylation is essential for the interaction with host SRC. Post-translationally, ubiquitinated. Ubiquitination, most probably at Lys-2350, mediated by host IFI27 and SKP2 leads to proteasomal degradation, restricting viral infection. Ubiquitination by host TRIM22 leads to interruption of viral replication. In terms of processing, the N-terminus is phosphorylated by host PRK2/PKN2.

It localises to the host endoplasmic reticulum membrane. The protein resides in the host mitochondrion membrane. It is found in the virion. Its subcellular location is the host cytoplasm. The protein localises to the host nucleus. It localises to the host lipid droplet. The protein resides in the virion membrane. It is found in the host mitochondrion. Its subcellular location is the host cell membrane. The protein localises to the host perinuclear region. It catalyses the reaction Hydrolysis of four peptide bonds in the viral precursor polyprotein, commonly with Asp or Glu in the P6 position, Cys or Thr in P1 and Ser or Ala in P1'.. The catalysed reaction is a ribonucleoside 5'-triphosphate + H2O = a ribonucleoside 5'-diphosphate + phosphate + H(+). The enzyme catalyses ATP + H2O = ADP + phosphate + H(+). It carries out the reaction RNA(n) + a ribonucleoside 5'-triphosphate = RNA(n+1) + diphosphate. With respect to regulation, inhibited by the antiviral drug hexamethylene amiloride. Inhibition by amantadine appears to be genotype-dependent. Also inhibited by long-alkyl-chain iminosugar derivatives. Activity is up-regulated by PRK2/PKN2-mediated phosphorylation. Its function is as follows. Packages viral RNA to form a viral nucleocapsid, and promotes virion budding. Participates in the viral particle production as a result of its interaction with the non-structural protein 5A. Binds RNA and may function as a RNA chaperone to induce the RNA structural rearrangements taking place during virus replication. Modulates viral translation initiation by interacting with viral IRES and 40S ribosomal subunit. Affects various cell signaling pathways, host immunity and lipid metabolism. Prevents the establishment of cellular antiviral state by blocking the interferon-alpha/beta (IFN-alpha/beta) and IFN-gamma signaling pathways and by blocking the formation of phosphorylated STAT1 and promoting ubiquitin-mediated proteasome-dependent degradation of STAT1. Activates STAT3 leading to cellular transformation. Regulates the activity of cellular genes, including c-myc and c-fos. May repress the promoter of p53, and sequester CREB3 and SP110 isoform 3/Sp110b in the cytoplasm. Represses cell cycle negative regulating factor CDKN1A, thereby interrupting an important check point of normal cell cycle regulation. Targets transcription factors involved in the regulation of inflammatory responses and in the immune response: suppresses TNF-induced NF-kappa-B activation, and activates AP-1. Binds to dendritic cells (DCs) via C1QR1, resulting in down-regulation of T-lymphocytes proliferation. Alters lipid metabolism by interacting with hepatocellular proteins involved in lipid accumulation and storage. Induces up-regulation of FAS promoter activity, and thereby contributes to the increased triglyceride accumulation in hepatocytes (steatosis). In terms of biological role, forms a heterodimer with envelope glycoprotein E2, which mediates virus attachment to the host cell, virion internalization through clathrin-dependent endocytosis and fusion with host membrane. Fusion with the host cell is most likely mediated by both E1 and E2, through conformational rearrangements of the heterodimer required for fusion rather than a classical class II fusion mechanism. E1/E2 heterodimer binds host apolipoproteins such as APOB and ApoE thereby forming a lipo-viro-particle (LVP). APOE associated to the LVP allows the initial virus attachment to cell surface receptors such as the heparan sulfate proteoglycans (HSPGs), syndecan-1 (SDC1), syndecan-1 (SDC2), the low-density lipoprotein receptor (LDLR) and scavenger receptor class B type I (SCARB1). The cholesterol transfer activity of SCARB1 allows E2 exposure and binding of E2 to SCARB1 and the tetraspanin CD81. E1/E2 heterodimer binding on CD81 activates the epithelial growth factor receptor (EGFR) signaling pathway. Diffusion of the complex E1-E2-EGFR-SCARB1-CD81 to the cell lateral membrane allows further interaction with Claudin 1 (CLDN1) and occludin (OCLN) to finally trigger HCV entry. Forms a heterodimer with envelope glycoprotein E1, which mediates virus attachment to the host cell, virion internalization through clathrin-dependent endocytosis and fusion with host membrane. Fusion with the host cell is most likely mediated by both E1 and E2, through conformational rearrangements of the heterodimer required for fusion rather than a classical class II fusion mechanism. The interaction between envelope glycoprotein E2 and host apolipoprotein E/APOE allows the proper assembly, maturation and infectivity of the viral particles. This interaction is probably promoted via the up-regulation of cellular autophagy by the virus. E1/E2 heterodimer binds host apolipoproteins such as APOB and APOE thereby forming a lipo-viro-particle (LVP). APOE associated to the LVP allows the initial virus attachment to cell surface receptors such as the heparan sulfate proteoglycans (HSPGs), syndecan-1 (SDC1), syndecan-1 (SDC2), the low-density lipoprotein receptor (LDLR) and scavenger receptor class B type I (SCARB1). The cholesterol transfer activity of SCARB1 allows E2 exposure and binding of E2 to SCARB1 and the tetraspanin CD81. E1/E2 heterodimer binding on CD81 activates the epithelial growth factor receptor (EGFR) signaling pathway. Diffusion of the complex E1-E2-EGFR-SCARB1-CD81 to the cell lateral membrane allows further interaction with Claudin 1 (CLDN1) and occludin (OCLN) to finally trigger HCV entry. Inhibits host EIF2AK2/PKR activation, preventing the establishment of an antiviral state. Viral ligand for CD209/DC-SIGN and CLEC4M/DC-SIGNR, which are respectively found on dendritic cells (DCs), and on liver sinusoidal endothelial cells and macrophage-like cells of lymph node sinuses. These interactions allow the capture of circulating HCV particles by these cells and subsequent facilitated transmission to permissive cells such as hepatocytes and lymphocyte subpopulations. The interaction between E2 and host amino acid transporter complex formed by SLC3A2 and SLC7A5/LAT1 may facilitate viral entry into host cell. Functionally, ion channel protein that acts as a viroporin and plays an essential role in the assembly, envelopment and secretion of viral particles. Regulates the host cell secretory pathway, which induces the intracellular retention of viral glycoproteins and favors assembly of viral particles. Creates a pore in acidic organelles and releases Ca(2+) and H(+) in the cytoplasm of infected cells, leading to a productive viral infection. High levels of cytoplasmic Ca(2+) may trigger membrane trafficking and transport of viral ER-associated proteins to viroplasms, sites of viral genome replication. This ionic imbalance induces the assembly of the inflammasome complex, which triggers the maturation of pro-IL-1beta into IL-1beta through the action of caspase-1. Targets also host mitochondria and induces mitochondrial depolarization. In addition of its role as a viroporin, acts as a lipid raft adhesion factor. Its function is as follows. Cysteine protease required for the proteolytic auto-cleavage between the non-structural proteins NS2 and NS3. The N-terminus of NS3 is required for the function of NS2 protease (active region NS2-3). Promotes the initiation of viral particle assembly by mediating the interaction between structural and non-structural proteins. In terms of biological role, displays three enzymatic activities: serine protease with a chymotrypsin-like fold, NTPase and RNA helicase. NS3 serine protease, in association with NS4A, is responsible for the cleavages of NS3-NS4A, NS4A-NS4B, NS4B-NS5A and NS5A-NS5B. The NS3/NS4A complex prevents phosphorylation of host IRF3, thus preventing the establishment of dsRNA induced antiviral state. The NS3/NS4A complex induces host amino acid transporter component SLC3A2, thus contributing to HCV propagation. NS3 RNA helicase binds to RNA and unwinds both dsDNA and dsRNA in the 3' to 5' direction, and likely resolves RNA complicated stable secondary structures in the template strand. Binds a single ATP and catalyzes the unzipping of a single base pair of dsRNA. Inhibits host antiviral proteins TBK1 and IRF3 thereby preventing the establishment of an antiviral state. Cleaves host MAVS/CARDIF thereby preventing the establishment of an antiviral state. Cleaves host TICAM1/TRIF, thereby disrupting TLR3 signaling and preventing the establishment of an antiviral state. Peptide cofactor which forms a non-covalent complex with the N-terminal of NS3 serine protease. The NS3/NS4A complex prevents phosphorylation of host IRF3, thus preventing the establishment of dsRNA induced antiviral state. The NS3/NS4A complex induces host amino acid transporter component SLC3A2, thus contributing to HCV propagation. Functionally, induces a specific membrane alteration that serves as a scaffold for the virus replication complex. This membrane alteration gives rise to the so-called ER-derived membranous web that contains the replication complex. NS4B self-interaction contributes to its function in membranous web formation. Promotes host TRIF protein degradation in a CASP8-dependent manner thereby inhibiting host TLR3-mediated interferon signaling. Disrupts the interaction between STING and TBK1 contributing to the inhibition of interferon signaling. Its function is as follows. Phosphorylated protein that is indispensable for viral replication and assembly. Both hypo- and hyperphosphorylated states are required for the viral life cycle. The hyperphosphorylated form of NS5A is an inhibitor of viral replication. Involved in RNA-binding and especially in binding to the viral genome. Zinc is essential for RNA-binding. Participates in the viral particle production as a result of its interaction with the mature viral core protein. Its interaction with host VAPB may target the viral replication complex to vesicles. Down-regulates viral IRES translation initiation. Mediates interferon resistance, presumably by interacting with and inhibiting host EIF2AK2/PKR. Prevents BIN1-induced apoptosis. Acts as a transcriptional activator of some host genes important for viral replication when localized in the nucleus. Via the interaction with host PACSIN2, modulates lipid droplet formation in order to promote virion assembly. Modulates TNFRSF21/DR6 signaling pathway for viral propagation. In terms of biological role, RNA-dependent RNA polymerase that performs primer-template recognition and RNA synthesis during viral replication. Initiates RNA transcription/replication at a flavin adenine dinucleotide (FAD), resulting in a 5'- FAD cap on viral RNAs. In this way, recognition of viral 5' RNA by host pattern recognition receptors can be bypassed, thereby evading activation of antiviral pathways. This Hepatitis C virus genotype 2k (isolate VAT96) (HCV) protein is Genome polyprotein.